The primary structure comprises 214 residues: Pyridoxine/pyridoxamine 5'-phosphate oxidase (214 aa).

Residues 8 to 11 and K66 each bind substrate; that span reads RINY. Residues 61-66, 76-77, R82, K83, and Q105 each bind FMN; these read RIVLIK and FT. Substrate contacts are provided by Y123, R127, and S131. FMN is bound by residues 140-141 and W184; that span reads QS. 190–192 contacts substrate; it reads RLH. R194 is an FMN binding site.

This sequence belongs to the pyridoxamine 5'-phosphate oxidase family. In terms of assembly, homodimer. FMN is required as a cofactor.

The enzyme catalyses pyridoxamine 5'-phosphate + O2 + H2O = pyridoxal 5'-phosphate + H2O2 + NH4(+). The catalysed reaction is pyridoxine 5'-phosphate + O2 = pyridoxal 5'-phosphate + H2O2. It participates in cofactor metabolism; pyridoxal 5'-phosphate salvage; pyridoxal 5'-phosphate from pyridoxamine 5'-phosphate: step 1/1. The protein operates within cofactor metabolism; pyridoxal 5'-phosphate salvage; pyridoxal 5'-phosphate from pyridoxine 5'-phosphate: step 1/1. Functionally, catalyzes the oxidation of either pyridoxine 5'-phosphate (PNP) or pyridoxamine 5'-phosphate (PMP) into pyridoxal 5'-phosphate (PLP). The polypeptide is Pyridoxine/pyridoxamine 5'-phosphate oxidase (Burkholderia lata (strain ATCC 17760 / DSM 23089 / LMG 22485 / NCIMB 9086 / R18194 / 383)).